Reading from the N-terminus, the 226-residue chain is Lysoplasmalogenase TMEM86B (226 aa).

Over 1–23 (MDAGKAGQTLKTHCSAQRPDVCR) the chain is Cytoplasmic. A helical transmembrane segment spans residues 24–40 (WLSPFILSCCVYFCLWI). Residues 41 to 46 (PEDQLS) are Extracellular-facing. Residues 47 to 67 (WFAALVKCLPVLCLAGFLWVM) traverse the membrane as a helical segment. Residues 68–75 (SPSGGYTQ) lie on the Cytoplasmic side of the membrane. The helical transmembrane segment at 76–93 (LLQGALVCSAVGDACLIW) threads the bilayer. At 94-100 (PAAFVPG) the chain is on the extracellular side. A helical transmembrane segment spans residues 101–117 (MAAFATAHLLYVWAFGF). At 118 to 123 (SPLQPG) the chain is on the cytoplasmic side. A helical membrane pass occupies residues 124–140 (LLLLIILAPGPYLSLVL). At 141–146 (QHLEPD) the chain is on the extracellular side. A helical membrane pass occupies residues 147 to 163 (MVLPVAAYGLILMAMLW). The Cytoplasmic segment spans residues 164–171 (RGLAQGGS). A helical transmembrane segment spans residues 172–188 (AGWGALLFTLSDGVLAW). Residues 189–199 (DTFAQPLPHAH) lie on the Extracellular side of the membrane. Residues 200–218 (LVIMTTYYAAQLLITLSAL) traverse the membrane as a helical segment. At 219-226 (RSPVPKTD) the chain is on the cytoplasmic side.

Belongs to the TMEM86 family. In terms of assembly, homodimer.

The protein localises to the endoplasmic reticulum membrane. It is found in the cytoplasm. The enzyme catalyses a 1-O-(1Z-alkenyl)-sn-glycero-3-phosphocholine + H2O = a 2,3-saturated aldehyde + sn-glycerol 3-phosphocholine. The catalysed reaction is a 1-O-(1Z-alkenyl)-sn-glycero-3-phosphoethanolamine + H2O = a 2,3-saturated aldehyde + sn-glycero-3-phosphoethanolamine. With respect to regulation, competitively inhibited by lysophosphatidic acid. Its function is as follows. Catalyzes the hydrolysis of the vinyl ether bond of choline or ethanolamine lysoplasmalogens, forming fatty aldehyde and glycerophosphocholine or glycerophosphoethanolamine, respectively and is specific for the sn-2-deacylated (lyso) form of plasmalogen. In Homo sapiens (Human), this protein is Lysoplasmalogenase TMEM86B (TMEM86B).